The sequence spans 780 residues: ATP-dependent 6-phosphofructokinase, liver type (780 aa).

Ala2 carries the post-translational modification N-acetylalanine. Positions 2–390 (AAVDLEKLRA…NWNIYKLLAH (389 aa)) are N-terminal catalytic PFK domain 1. ATP-binding positions include Gly25, 88–89 (RC), and 118–121 (GDGS). Asp119 provides a ligand contact to Mg(2+). Residues 164–166 (SID), Arg201, 208–210 (MGR), Glu264, Arg292, and 298–301 (HVQR) each bind substrate. Asp166 functions as the Proton acceptor in the catalytic mechanism. Phosphoserine is present on Ser377. The interval 391–400 (QKPPKEKSNF) is interdomain linker. The C-terminal regulatory PFK domain 2 stretch occupies residues 401–780 (SLAILNVGAP…RRTLSMDKGF (380 aa)). Residues Arg470, 527–531 (TISNN), Arg565, 572–574 (MGG), and Glu628 contribute to the beta-D-fructose 2,6-bisphosphate site. An O-linked (GlcNAc) serine glycan is attached at Ser529. Tyr640 carries the post-translational modification Phosphotyrosine. Beta-D-fructose 2,6-bisphosphate-binding positions include Arg654, 660–663 (HLQQ), and Arg734. Ser775 is modified (phosphoserine).

This sequence belongs to the phosphofructokinase type A (PFKA) family. ATP-dependent PFK group I subfamily. Eukaryotic two domain clade 'E' sub-subfamily. Homo- and heterotetramers. Phosphofructokinase (PFK) enzyme functions as a tetramer composed of different combinations of 3 types of subunits, called PFKM (M), PFKL (L) and PFKP (P). The composition of the PFK tetramer differs according to the tissue type it is present in. The kinetic and regulatory properties of the tetrameric enzyme are dependent on the subunit composition, hence can vary across tissues. Mg(2+) is required as a cofactor. GlcNAcylation at Ser-529 by OGT decreases enzyme activity, leading to redirect glucose flux through the oxidative pentose phosphate pathway. Glycosylation is stimulated by both hypoxia and glucose deprivation.

The protein localises to the cytoplasm. It carries out the reaction beta-D-fructose 6-phosphate + ATP = beta-D-fructose 1,6-bisphosphate + ADP + H(+). It functions in the pathway carbohydrate degradation; glycolysis; D-glyceraldehyde 3-phosphate and glycerone phosphate from D-glucose: step 3/4. With respect to regulation, allosterically activated by ADP, AMP, or fructose 2,6-bisphosphate, and allosterically inhibited by ATP or citrate. GlcNAcylation by OGT overcomes allosteric regulation. In terms of biological role, catalyzes the phosphorylation of D-fructose 6-phosphate to fructose 1,6-bisphosphate by ATP, the first committing step of glycolysis. Negatively regulates the phagocyte oxidative burst in response to bacterial infection by controlling cellular NADPH biosynthesis and NADPH oxidase-derived reactive oxygen species. Upon macrophage activation, drives the metabolic switch toward glycolysis, thus preventing glucose turnover that produces NADPH via pentose phosphate pathway. The protein is ATP-dependent 6-phosphofructokinase, liver type (PFKL) of Pongo abelii (Sumatran orangutan).